A 117-amino-acid polypeptide reads, in one-letter code: Large ribosomal subunit protein uL18 (117 aa).

It belongs to the universal ribosomal protein uL18 family. Part of the 50S ribosomal subunit; part of the 5S rRNA/L5/L18/L25 subcomplex. Contacts the 5S and 23S rRNAs.

In terms of biological role, this is one of the proteins that bind and probably mediate the attachment of the 5S RNA into the large ribosomal subunit, where it forms part of the central protuberance. The sequence is that of Large ribosomal subunit protein uL18 from Aeromonas salmonicida (strain A449).